The chain runs to 164 residues: Large ribosomal subunit protein eL24z (164 aa).

Basic and acidic residues predominate over residues 117 to 133 (ERIKKTKDEKKAKKVEY). Residues 117-164 (ERIKKTKDEKKAKKVEYASKQQKSQVKGNIPKSAAPKAAKMGGGGGRR) are disordered.

This sequence belongs to the eukaryotic ribosomal protein eL24 family. As to quaternary structure, interacts with the cauliflower mosaic virus transactivator TAV to form a TAV/60S complex. Interacts with REIL1 AND REIL2.

Might have an extraribosomal function in reinitiation of translation. The chain is Large ribosomal subunit protein eL24z (RPL24A) from Arabidopsis thaliana (Mouse-ear cress).